Reading from the N-terminus, the 382-residue chain is GDP-mannose transporter (382 aa).

The Cytoplasmic portion of the chain corresponds to 1 to 40 (MADDKKTNEYTIEMDKLDHGNKDFEAPAPAVRPRGPPVAQ). A helical transmembrane segment spans residues 41 to 61 (LANNPILPVLAYCGSSILMTV). Topologically, residues 62-71 (MNKYVLSGRD) are lumenal. The helical transmembrane segment at 72–92 (FNLNFFLLCVQSIVCIVAIQT) threads the bilayer. Topologically, residues 93 to 110 (CKVSKLITYRDFNSDEAK) are cytoplasmic. Residues 111 to 127 (KWFPITLLLIGMIYTGS) traverse the membrane as a helical segment. Residues 128 to 134 (KALQYLS) are Lumenal-facing. The helical transmembrane segment at 135–151 (IPVYTIFKNLTIILIAY) threads the bilayer. Topologically, residues 152-160 (GEVLWFGGS) are cytoplasmic. Residues 161–182 (VTGLTLFSFGLMVLSSIIAAWA) form a helical membrane-spanning segment. Over 183-200 (DIKHAVESSGDATAKVST) the chain is Lumenal. The chain crosses the membrane as a helical span at residues 201-221 (LNAGYIWMLINCLCTSSYVLG). Over 222–233 (MRKRIKLTNFKD) the chain is Cytoplasmic. A helical membrane pass occupies residues 234 to 254 (FDTMFYNNLLSIPVLLVLTFL). The Lumenal segment spans residues 255-274 (MEDWSSANIARNFPSTDRNG). Residues 275 to 295 (ILFAMILSGLSSVFISYTSAW) form a helical membrane-spanning segment. Residues 296 to 303 (CVRVTSST) lie on the Cytoplasmic side of the membrane. The helical transmembrane segment at 304–324 (TYSMVGALNKLPIALSGLIFF) threads the bilayer. At 325–327 (DAP) the chain is on the lumenal side. The chain crosses the membrane as a helical span at residues 328–348 (VTFPSVSAIVVGFISGIVYAV). The Cytoplasmic segment spans residues 349–382 (AKIKQSAKPKTGVLPMSNPPVSASSQSMRDSLRS). The segment at 358–382 (KTGVLPMSNPPVSASSQSMRDSLRS) is disordered. Polar residues predominate over residues 367–382 (PPVSASSQSMRDSLRS).

The protein belongs to the TPT transporter family. SLC35D subfamily. As to quaternary structure, homooligomer.

The protein resides in the golgi apparatus membrane. It localises to the cytoplasmic vesicle membrane. The protein localises to the endoplasmic reticulum membrane. Functionally, involved in the import of GDP-mannose from the cytoplasm into the Golgi lumen. The protein is GDP-mannose transporter (gmt1) of Aspergillus fumigatus (strain CBS 144.89 / FGSC A1163 / CEA10) (Neosartorya fumigata).